The sequence spans 626 residues: Procollagen galactosyltransferase 2 (626 aa).

A signal peptide spans 1–27 (MAARPAATLAWSLLLLSSALLREGCRA). Residues Asn-97, Asn-185, Asn-382, and Asn-580 are each glycosylated (N-linked (GlcNAc...) asparagine). Residues 604-626 (NAKNTEALPPPTSLDTVPSRDEL) are disordered. Positions 623–626 (RDEL) match the Prevents secretion from ER motif.

The protein belongs to the glycosyltransferase 25 family. Expressed in brain and skeletal muscle.

The protein resides in the endoplasmic reticulum lumen. It catalyses the reaction (5R)-5-hydroxy-L-lysyl-[collagen] + UDP-alpha-D-galactose = (5R)-5-O-(beta-D-galactosyl)-5-hydroxy-L-lysyl-[collagen] + UDP + H(+). In terms of biological role, beta-galactosyltransferase that transfers beta-galactose to hydroxylysine residues of collagen. The polypeptide is Procollagen galactosyltransferase 2 (COLGALT2) (Homo sapiens (Human)).